The following is a 203-amino-acid chain: Thymidylate kinase (203 aa).

14 to 21 is an ATP binding site; that stretch reads GGEGIGKS.

Belongs to the thymidylate kinase family.

The catalysed reaction is dTMP + ATP = dTDP + ADP. Functionally, phosphorylation of dTMP to form dTDP in both de novo and salvage pathways of dTTP synthesis. The sequence is that of Thymidylate kinase from Rickettsia conorii (strain ATCC VR-613 / Malish 7).